Consider the following 161-residue polypeptide: N5-carboxyaminoimidazole ribonucleotide mutase (161 aa).

Substrate is bound by residues Ser9, Asp12, and Arg39.

Belongs to the AIR carboxylase family. Class I subfamily.

It catalyses the reaction 5-carboxyamino-1-(5-phospho-D-ribosyl)imidazole + H(+) = 5-amino-1-(5-phospho-D-ribosyl)imidazole-4-carboxylate. It participates in purine metabolism; IMP biosynthesis via de novo pathway; 5-amino-1-(5-phospho-D-ribosyl)imidazole-4-carboxylate from 5-amino-1-(5-phospho-D-ribosyl)imidazole (N5-CAIR route): step 2/2. Catalyzes the conversion of N5-carboxyaminoimidazole ribonucleotide (N5-CAIR) to 4-carboxy-5-aminoimidazole ribonucleotide (CAIR). This chain is N5-carboxyaminoimidazole ribonucleotide mutase, found in Vibrio parahaemolyticus serotype O3:K6 (strain RIMD 2210633).